The sequence spans 563 residues: Inositol-3-phosphate synthase 1-B (563 aa).

It belongs to the myo-inositol 1-phosphate synthase family. The cofactor is NAD(+).

Its subcellular location is the cytoplasm. The enzyme catalyses D-glucose 6-phosphate = 1D-myo-inositol 3-phosphate. It participates in polyol metabolism; myo-inositol biosynthesis; myo-inositol from D-glucose 6-phosphate: step 1/2. Key enzyme in myo-inositol biosynthesis pathway that catalyzes the conversion of glucose 6-phosphate to 1-myo-inositol 1-phosphate in a NAD-dependent manner. Rate-limiting enzyme in the synthesis of all inositol-containing compounds. The polypeptide is Inositol-3-phosphate synthase 1-B (isyna1-b) (Xenopus laevis (African clawed frog)).